The primary structure comprises 148 residues: Lysozyme C (148 aa).

The signal sequence occupies residues 1–18; the sequence is MKALIILGLVLLSVTVQG. Residues 19–148 enclose the C-type lysozyme domain; sequence KIFERCELAR…VSQYVKGCGV (130 aa). 4 disulfides stabilise this stretch: C24/C146, C48/C134, C83/C99, and C95/C113. Catalysis depends on residues E53 and D71.

It belongs to the glycosyl hydrolase 22 family. Monomer.

It is found in the secreted. The catalysed reaction is Hydrolysis of (1-&gt;4)-beta-linkages between N-acetylmuramic acid and N-acetyl-D-glucosamine residues in a peptidoglycan and between N-acetyl-D-glucosamine residues in chitodextrins.. Functionally, lysozymes have primarily a bacteriolytic function; those in tissues and body fluids are associated with the monocyte-macrophage system and enhance the activity of immunoagents. The chain is Lysozyme C (LYZ) from Nasalis larvatus (Proboscis monkey).